A 77-amino-acid polypeptide reads, in one-letter code: Translation initiation factor IF-1, chloroplastic (77 aa).

The S1-like domain maps to 1–71; sequence MKEQKWIHEG…SRGRIIYRLR (71 aa).

The protein belongs to the IF-1 family. Component of the 30S ribosomal translation pre-initiation complex which assembles on the 30S ribosome in the order IF-2 and IF-3, IF-1 and N-formylmethionyl-tRNA(fMet); mRNA recruitment can occur at any time during PIC assembly.

The protein localises to the plastid. It localises to the chloroplast. In terms of biological role, one of the essential components for the initiation of protein synthesis. Stabilizes the binding of IF-2 and IF-3 on the 30S subunit to which N-formylmethionyl-tRNA(fMet) subsequently binds. Helps modulate mRNA selection, yielding the 30S pre-initiation complex (PIC). Upon addition of the 50S ribosomal subunit IF-1, IF-2 and IF-3 are released leaving the mature 70S translation initiation complex. In Buxus microphylla (Littleleaf boxwood), this protein is Translation initiation factor IF-1, chloroplastic.